We begin with the raw amino-acid sequence, 858 residues long: Leucine--tRNA ligase (858 aa).

The short motif at 42–52 (PYPSGRLHMGH) is the 'HIGH' region element. The 'KMSKS' region signature appears at 618-622 (KMSKS). Residue Lys-621 coordinates ATP.

Belongs to the class-I aminoacyl-tRNA synthetase family.

Its subcellular location is the cytoplasm. It catalyses the reaction tRNA(Leu) + L-leucine + ATP = L-leucyl-tRNA(Leu) + AMP + diphosphate. The chain is Leucine--tRNA ligase from Vibrio cholerae serotype O1 (strain ATCC 39541 / Classical Ogawa 395 / O395).